Consider the following 79-residue polypeptide: Conotoxin ArMSGL-0122 (79 aa).

Residues methionine 1 to serine 20 form the signal peptide. The propeptide occupies histidine 21–threonine 44. 3 disulfide bridges follow: cysteine 52-cysteine 64, cysteine 56-cysteine 73, and cysteine 63-cysteine 77. Leucine 78 carries the leucine amide modification.

Belongs to the conotoxin O3 superfamily. In terms of tissue distribution, expressed by the venom duct.

It localises to the secreted. The polypeptide is Conotoxin ArMSGL-0122 (Conus arenatus (Sand-dusted cone)).